The sequence spans 377 residues: Odorant receptor 30a (377 aa).

Residues 1–34 (MELKSMDPVEMPIFGSTLKLMKFWSYLFVHNWRR) are Cytoplasmic-facing. A helical transmembrane segment spans residues 35-55 (YVAMTPYIIINCTQYVDIYLS). Over 56–65 (TESLDFIIRN) the chain is Extracellular. The chain crosses the membrane as a helical span at residues 66 to 86 (VYLAVLFTNTVVRGVLLCVQR). Residues 87–127 (FSYERFINILKSFYIELLQSDDPIINILVKETTRLSVLISR) lie on the Cytoplasmic side of the membrane. A helical transmembrane segment spans residues 128–148 (INLLMGCCTCIGFVTYPIFGS). The Extracellular segment spans residues 149–172 (ERVLPYGMYLPTIDEYKYASPYYE). Residues 173–193 (IFFVIQAIMAPMGCCMYIPYT) form a helical membrane-spanning segment. At 194–254 (NMVVTFTLFA…SMNALNTHLH (61 aa)) the chain is on the cytoplasmic side. The helical transmembrane segment at 255 to 275 (LVEFLCFGAMLCVLLFSLIIA) threads the bilayer. Topologically, residues 276-280 (QTIAQ) are extracellular. Residues 281-301 (TVIVIAYMVMIFANSVVLYYV) traverse the membrane as a helical segment. The Cytoplasmic portion of the chain corresponds to 302–344 (ANELYFQSFDIAIAAYESNWMDFDVDTQKTLKFLIMRSQKPLA). Residues 345-365 (ILVGGTYPMNLKMLQSLLNAI) traverse the membrane as a helical segment. The Extracellular segment spans residues 366–377 (YSFFTLLRRVYG).

This sequence belongs to the insect chemoreceptor superfamily. Heteromeric odorant receptor channel (TC 1.A.69) family. Or30a subfamily. Interacts with Orco. Complexes exist early in the endomembrane system in olfactory sensory neurons (OSNs), coupling these complexes to the conserved ciliary trafficking pathway.

It is found in the cell membrane. Odorant receptor which mediates acceptance or avoidance behavior, depending on its substrates. The odorant receptor repertoire encodes a large collection of odor stimuli that vary widely in identity, intensity, and duration. May form a complex with Orco to form odorant-sensing units, providing sensitive and prolonged odorant signaling and calcium permeability. Involved in the behavioral responses to propyl acetate and anisole. This chain is Odorant receptor 30a (Or30a), found in Drosophila melanogaster (Fruit fly).